The chain runs to 392 residues: Tryptophan synthase beta chain (392 aa).

Lysine 86 is modified (N6-(pyridoxal phosphate)lysine).

It belongs to the TrpB family. As to quaternary structure, tetramer of two alpha and two beta chains. The cofactor is pyridoxal 5'-phosphate.

The catalysed reaction is (1S,2R)-1-C-(indol-3-yl)glycerol 3-phosphate + L-serine = D-glyceraldehyde 3-phosphate + L-tryptophan + H2O. It functions in the pathway amino-acid biosynthesis; L-tryptophan biosynthesis; L-tryptophan from chorismate: step 5/5. Functionally, the beta subunit is responsible for the synthesis of L-tryptophan from indole and L-serine. The polypeptide is Tryptophan synthase beta chain (trpB) (Buchnera aphidicola subsp. Schlechtendalia chinensis).